Consider the following 510-residue polypeptide: Serine carboxypeptidase 1 (510 aa).

Positions 1–25 (MARRGRRSLASPAVAIALFVFLAYG) are cleaved as a signal peptide. The propeptide occupies 26–36 (GGGGGGGVCEA). 3 disulfide bridges follow: Cys-98–Cys-399, Cys-262–Cys-274, and Cys-297–Cys-366. Residue Asn-154 is glycosylated (N-linked (GlcNAc...) asparagine). The active site involves Ser-194. Residue Asn-268 is glycosylated (N-linked (GlcNAc...) asparagine). Residues 303 to 362 (IKKVTPANTKLPKSFQHLGTTTKPLAVRTRMHGRAWPLRAPVRAGRVPSWQEFARGSRPS) constitute a propeptide, linker peptide. N-linked (GlcNAc...) asparagine glycosylation is present at Asn-418. Catalysis depends on residues Asp-434 and His-487. The Microbody targeting signal motif lies at 508-510 (SKL).

The protein belongs to the peptidase S10 family.

The catalysed reaction is Release of a C-terminal amino acid with broad specificity.. The chain is Serine carboxypeptidase 1 (CBP1) from Oryza sativa subsp. japonica (Rice).